Consider the following 204-residue polypeptide: LexA repressor (204 aa).

The H-T-H motif DNA-binding region spans 28 to 48; the sequence is VREIGQAVGLASSSTVHGHLS. Residues Ser126 and Lys164 each act as for autocatalytic cleavage activity in the active site.

It belongs to the peptidase S24 family. Homodimer.

It catalyses the reaction Hydrolysis of Ala-|-Gly bond in repressor LexA.. Represses a number of genes involved in the response to DNA damage (SOS response), including recA and lexA. In the presence of single-stranded DNA, RecA interacts with LexA causing an autocatalytic cleavage which disrupts the DNA-binding part of LexA, leading to derepression of the SOS regulon and eventually DNA repair. The chain is LexA repressor from Bacillus mycoides (strain KBAB4) (Bacillus weihenstephanensis).